The primary structure comprises 76 residues: MFTLKKSMLLLFFLGTISLSLCEEERNADEDDGEKEVKRGIFALIKTAAKFVGKNLLKQAGKAGLEHLACKANNQC.

Positions 1 to 22 are cleaved as a signal peptide; sequence MFTLKKSMLLLFFLGTISLSLC. The propeptide occupies 23–39; the sequence is EEERNADEDDGEKEVKR. A disulfide bond links C70 and C76.

As to expression, expressed by the skin glands.

The protein localises to the secreted. Functionally, antimicrobial peptide with activity against Gram-positive and Gram-negative bacteria and against fungi. Has been tested against S.aureus (MIC=2.5 ug/mL), B.pumilus (MIC=2.5 ug/mL), B.cereus (MIC=7.5 ug/mL), E.coli (MIC=12.5 ug/mL), B.dysenteriae (MIC=7.5 ug/mL), A.cacoaceticus (MIC=25.0 ug/mL), P.aeruginosa (MIC=50.0 ug/mL) and C.albicans (MIC=2.5 ug/mL). Also shows a weak hemolytic activity. This Amolops loloensis (Lolokou Sucker Frog) protein is Esculentin-2-ALa.